Here is a 281-residue protein sequence, read N- to C-terminus: Protein synthesis inhibitor I (281 aa).

At alanine 2 the chain carries N-acetylalanine. Glutamate 175 is an active-site residue.

This sequence belongs to the ribosome-inactivating protein family. Type 1 RIP subfamily.

The protein resides in the cytoplasm. It catalyses the reaction Endohydrolysis of the N-glycosidic bond at one specific adenosine on the 28S rRNA.. In terms of biological role, inhibits the elongation phase of protein synthesis. It inactivates fungal ribosomes even more effectively than mammalian ribosomes and is thought to function as a constitutive antifungal agent in plants. This Hordeum vulgare (Barley) protein is Protein synthesis inhibitor I (RIP30).